The following is a 960-amino-acid chain: Endosome/lysosome-associated apoptosis and autophagy regulator family member 2 (960 aa).

The tract at residues 1 to 26 (MLFLRPGPARGRGRGRPARAPHSGLS) is disordered. Positions 1–44 (MLFLRPGPARGRGRGRPARAPHSGLSPPWSPAWICCWALAGCQA) are cleaved as a signal peptide. The Extracellular segment spans residues 45 to 860 (AWAGAGDLPS…TCETVDFWLK (816 aa)). An N-linked (GlcNAc...) asparagine glycan is attached at N171. Cystine bridges form between C295-C312, C325-C348, and C328-C360. N-linked (GlcNAc...) asparagine glycans are attached at residues N407 and N622. The 212-residue stretch at 597 to 808 (PTCPYIRSMA…LWESVEACPL (212 aa)) folds into the MRH domain. Cystine bridges form between C599-C651, C661-C689, C758-C794, and C770-C806. Residues 861–881 (VGAGVGAFTAVLLVALTCYFW) form a helical membrane-spanning segment. Topologically, residues 882–960 (KKNQKLEYKY…QLKSSRSPNI (79 aa)) are cytoplasmic. S949 carries the post-translational modification Phosphoserine.

This sequence belongs to the ELAPOR family.

Its subcellular location is the cell membrane. Functionally, functions as a regulator of the BMP signaling pathway and may be involved in epidermal differentiation. The chain is Endosome/lysosome-associated apoptosis and autophagy regulator family member 2 from Bos taurus (Bovine).